Here is a 236-residue protein sequence, read N- to C-terminus: Small ribosomal subunit protein uS3 (236 aa).

Residues 39–107 (VRHFLMQKLS…PTQLNIAEVR (69 aa)) form the KH type-2 domain.

This sequence belongs to the universal ribosomal protein uS3 family. In terms of assembly, part of the 30S ribosomal subunit. Forms a tight complex with proteins S10 and S14.

Binds the lower part of the 30S subunit head. Binds mRNA in the 70S ribosome, positioning it for translation. This chain is Small ribosomal subunit protein uS3, found in Blochmanniella pennsylvanica (strain BPEN).